The following is a 428-amino-acid chain: Dihydroorotase (428 aa).

Zn(2+) contacts are provided by His59 and His61. Substrate-binding positions include 61–63 (HLR) and Asn93. Asp151, His178, and His231 together coordinate Zn(2+). Asn277 is a substrate binding site. Asp304 lines the Zn(2+) pocket. Residue Asp304 is part of the active site. Substrate contacts are provided by residues His308 and 322 to 323 (FG).

The protein belongs to the metallo-dependent hydrolases superfamily. DHOase family. Class I DHOase subfamily. Zn(2+) serves as cofactor.

The enzyme catalyses (S)-dihydroorotate + H2O = N-carbamoyl-L-aspartate + H(+). The protein operates within pyrimidine metabolism; UMP biosynthesis via de novo pathway; (S)-dihydroorotate from bicarbonate: step 3/3. Functionally, catalyzes the reversible cyclization of carbamoyl aspartate to dihydroorotate. The polypeptide is Dihydroorotase (Bacillus cytotoxicus (strain DSM 22905 / CIP 110041 / 391-98 / NVH 391-98)).